The following is a 174-amino-acid chain: C-type lectin domain family 2 member A (174 aa).

Over 1–27 (MINPELRDGRADGFIHRIVPKLIQNWK) the chain is Cytoplasmic. The chain crosses the membrane as a helical; Signal-anchor for type II membrane protein span at residues 28–48 (IGLMCFLSIIITTVCIIMIAT). The Extracellular segment spans residues 49–174 (WSKHAKPVAC…WICSKPKYFL (126 aa)). A disulfide bridge connects residues Cys-58 and Cys-69. In terms of domain architecture, C-type lectin spans 65 to 174 (VRDKCFYFSD…WICSKPKYFL (110 aa)). N-linked (GlcNAc...) asparagine glycans are attached at residues Asn-78, Asn-130, and Asn-143. Cys-86 and Cys-167 form a disulfide bridge.

As to quaternary structure, homodimer; non-disulfide-linked. Interacts with KLRB1. Interacts with KLRF2. N-glycosylated. Mainly expressed in skin. Also expressed in keratinocytes, spleen, thymus, small intestine, peripheral blood monocytes, bone marrow, ovary, testis and skin. High expression in CD8(+), B-lymphocytes and naive CD4(+) T-cells. Restricted mostly to proliferating lymphocytes. Not detected in myeloid leukocytes or natural killer (NK) cells.

Its subcellular location is the cell membrane. Its function is as follows. Membrane-bound protein expressed mainly on keratinocytes which acts as a ligand to stimulate the activating receptor NKp65/KLRF2, expressed on the surface of natural killer (NK) cells. Facilitates thereby dedicated immune recognition of keratinocytes leading to natural killer cell mediated cytotoxicity. Also plays a role in modulating the extent of T-cell expansion. This chain is C-type lectin domain family 2 member A (CLEC2A), found in Homo sapiens (Human).